Here is a 443-residue protein sequence, read N- to C-terminus: ATP-dependent protease ATPase subunit HslU (443 aa).

Residues Ile20, 62–67 (GVGKTE), Asp255, Glu321, and Arg393 contribute to the ATP site.

Belongs to the ClpX chaperone family. HslU subfamily. In terms of assembly, a double ring-shaped homohexamer of HslV is capped on each side by a ring-shaped HslU homohexamer. The assembly of the HslU/HslV complex is dependent on binding of ATP.

It is found in the cytoplasm. Its function is as follows. ATPase subunit of a proteasome-like degradation complex; this subunit has chaperone activity. The binding of ATP and its subsequent hydrolysis by HslU are essential for unfolding of protein substrates subsequently hydrolyzed by HslV. HslU recognizes the N-terminal part of its protein substrates and unfolds these before they are guided to HslV for hydrolysis. This is ATP-dependent protease ATPase subunit HslU from Helicobacter pylori (strain HPAG1).